Reading from the N-terminus, the 30-residue chain is Hemocyanin subunit 2 (30 aa).

This sequence belongs to the tyrosinase family. Hemocyanin subfamily. Hemolymph.

The protein resides in the secreted. It is found in the extracellular space. Functionally, hemocyanins are copper-containing oxygen carriers occurring freely dissolved in the hemolymph of many mollusks and arthropods. This is Hemocyanin subunit 2 from Homarus americanus (American lobster).